The chain runs to 502 residues: Protein MGF 505-5R (502 aa).

Belongs to the asfivirus MGF 505 family.

In terms of biological role, plays a role in virus cell tropism, and may be required for efficient virus replication in macrophages. The chain is Protein MGF 505-5R from Ornithodoros (relapsing fever ticks).